The primary structure comprises 297 residues: Small ribosomal subunit biogenesis GTPase RsgA (297 aa).

Residues 65–223 form the CP-type G domain; the sequence is RNELVRPPVA…VADTPGFSAI (159 aa). GTP is bound by residues 114–117 and 166–174; these read TKVD and GQSGAGKST. Zn(2+)-binding residues include cysteine 247, cysteine 252, histidine 254, and cysteine 260.

Belongs to the TRAFAC class YlqF/YawG GTPase family. RsgA subfamily. Monomer. Associates with 30S ribosomal subunit, binds 16S rRNA. The cofactor is Zn(2+).

It localises to the cytoplasm. Functionally, one of several proteins that assist in the late maturation steps of the functional core of the 30S ribosomal subunit. Helps release RbfA from mature subunits. May play a role in the assembly of ribosomal proteins into the subunit. Circularly permuted GTPase that catalyzes slow GTP hydrolysis, GTPase activity is stimulated by the 30S ribosomal subunit. This chain is Small ribosomal subunit biogenesis GTPase RsgA, found in Enterococcus faecalis (strain ATCC 700802 / V583).